The chain runs to 417 residues: UDP-N-acetylglucosamine 1-carboxyvinyltransferase (417 aa).

Phosphoenolpyruvate is bound at residue 22–23; that stretch reads KN. R92 serves as a coordination point for UDP-N-acetyl-alpha-D-glucosamine. C116 functions as the Proton donor in the catalytic mechanism. A 2-(S-cysteinyl)pyruvic acid O-phosphothioketal modification is found at C116. The UDP-N-acetyl-alpha-D-glucosamine site is built by D304 and I326.

This sequence belongs to the EPSP synthase family. MurA subfamily.

The protein resides in the cytoplasm. The enzyme catalyses phosphoenolpyruvate + UDP-N-acetyl-alpha-D-glucosamine = UDP-N-acetyl-3-O-(1-carboxyvinyl)-alpha-D-glucosamine + phosphate. It participates in cell wall biogenesis; peptidoglycan biosynthesis. Cell wall formation. Adds enolpyruvyl to UDP-N-acetylglucosamine. The chain is UDP-N-acetylglucosamine 1-carboxyvinyltransferase from Geobacter metallireducens (strain ATCC 53774 / DSM 7210 / GS-15).